We begin with the raw amino-acid sequence, 144 residues long: 3-dehydroquinate dehydratase (144 aa).

Catalysis depends on Tyr22, which acts as the Proton acceptor. The substrate site is built by Asn71, His77, and Asp84. The active-site Proton donor is the His97. Residues 98 to 99 (IS) and Arg108 contribute to the substrate site.

Belongs to the type-II 3-dehydroquinase family. Homododecamer.

The catalysed reaction is 3-dehydroquinate = 3-dehydroshikimate + H2O. It participates in metabolic intermediate biosynthesis; chorismate biosynthesis; chorismate from D-erythrose 4-phosphate and phosphoenolpyruvate: step 3/7. Its function is as follows. Catalyzes a trans-dehydration via an enolate intermediate. This chain is 3-dehydroquinate dehydratase, found in Thermotoga petrophila (strain ATCC BAA-488 / DSM 13995 / JCM 10881 / RKU-1).